The following is a 211-amino-acid chain: Redox-sensing transcriptional repressor Rex (211 aa).

The H-T-H motif DNA-binding region spans 17–56; it reads KYHRYLEELLRNEVDRISSKELSKKIGFTASQIRQDFNCF. 91–96 contacts NAD(+); the sequence is GGGNIG.

This sequence belongs to the transcriptional regulatory Rex family. In terms of assembly, homodimer.

It localises to the cytoplasm. Functionally, modulates transcription in response to changes in cellular NADH/NAD(+) redox state. This is Redox-sensing transcriptional repressor Rex from Clostridium tetani (strain Massachusetts / E88).